A 245-amino-acid polypeptide reads, in one-letter code: tRNA pseudouridine synthase A (245 aa).

Asp52 serves as the catalytic Nucleophile. Tyr111 serves as a coordination point for substrate.

Belongs to the tRNA pseudouridine synthase TruA family. Homodimer.

It carries out the reaction uridine(38/39/40) in tRNA = pseudouridine(38/39/40) in tRNA. Its function is as follows. Formation of pseudouridine at positions 38, 39 and 40 in the anticodon stem and loop of transfer RNAs. In Rickettsia bellii (strain RML369-C), this protein is tRNA pseudouridine synthase A.